A 2353-amino-acid chain; its full sequence is C2 domain-containing protein 3 (2353 aa).

The disordered stretch occupies residues methionine 1–threonine 27. Serine 466 carries the phosphoserine modification. Disordered stretches follow at residues lysine 488–asparagine 508 and glycine 549–proline 568. Residues lysine 496 to arginine 507 show a composition bias toward basic residues. Residues aspartate 521–aspartate 678 form the C2 1 domain. The residue at position 728 (serine 728) is a Phosphoserine. C2 domains lie at serine 787–leucine 919, glutamine 985–aspartate 1147, serine 1171–tyrosine 1339, and glutamate 1403–valine 1533. Residues histidine 1569–glutamate 1591 are disordered. Positions threonine 1617–tyrosine 1745 constitute a C2 6 domain. A disordered region spans residues serine 1822–histidine 1846. Polar residues predominate over residues proline 1830–glutamine 1839. Serine 1891 is modified (phosphoserine). 4 disordered regions span residues alanine 1972 to arginine 2032, threonine 2084 to phenylalanine 2118, leucine 2130 to leucine 2269, and proline 2301 to proline 2334. The segment covering proline 2007–threonine 2016 has biased composition (basic and acidic residues). A compositionally biased stretch (polar residues) spans threonine 2084 to isoleucine 2098. 2 positions are modified to phosphoserine: serine 2114 and serine 2132. Residues serine 2181 to aspartate 2198 are compositionally biased toward polar residues. Residues serine 2236–glutamine 2253 are compositionally biased toward basic and acidic residues. The span at arginine 2254 to serine 2267 shows a compositional bias: polar residues.

As to quaternary structure, interacts with IFT88, BBS4 and PCM1. Interacts with OFD1; OFD1 may act as a negative regulator of C2CD3. Associates with the BBSome complex.

The protein resides in the cytoplasm. It localises to the cytoskeleton. The protein localises to the cilium basal body. It is found in the microtubule organizing center. Its subcellular location is the centrosome. The protein resides in the centriole. Functionally, component of the centrioles that acts as a positive regulator of centriole elongation. Promotes assembly of centriolar distal appendage, a structure at the distal end of the mother centriole that acts as an anchor of the cilium, and is required for recruitment of centriolar distal appendages proteins CEP83, SCLT1, CEP89, FBF1 and CEP164. Not required for centriolar satellite integrity or RAB8 activation. Required for primary cilium formation. Required for sonic hedgehog/SHH signaling and for proteolytic processing of GLI3. The polypeptide is C2 domain-containing protein 3 (C2CD3) (Homo sapiens (Human)).